A 117-amino-acid polypeptide reads, in one-letter code: UPF0251 protein DET0218 (117 aa).

This sequence belongs to the UPF0251 family.

The chain is UPF0251 protein DET0218 from Dehalococcoides mccartyi (strain ATCC BAA-2266 / KCTC 15142 / 195) (Dehalococcoides ethenogenes (strain 195)).